The chain runs to 334 residues: Peroxidase 65 (334 aa).

Positions 1–28 (MSNMQFSRGFNPFVILFCLAVVAPIISA) are cleaved as a signal peptide. Intrachain disulfides connect Cys42/Cys123, Cys75/Cys80, Cys129/Cys326, and Cys208/Cys236. His73 serves as the catalytic Proton acceptor. Asp74, Gly79, Asp81, and Ser83 together coordinate Ca(2+). Pro171 lines the substrate pocket. Asn174 carries N-linked (GlcNAc...) asparagine glycosylation. His201 provides a ligand contact to heme b. Position 202 (Thr202) interacts with Ca(2+). Asn238 carries N-linked (GlcNAc...) asparagine glycosylation. Ca(2+)-binding residues include Asp250, Thr253, and Asp258. N-linked (GlcNAc...) asparagine glycans are attached at residues Asn282 and Asn294.

Belongs to the peroxidase family. Classical plant (class III) peroxidase subfamily. Requires heme b as cofactor. It depends on Ca(2+) as a cofactor.

The protein resides in the secreted. The enzyme catalyses 2 a phenolic donor + H2O2 = 2 a phenolic radical donor + 2 H2O. Removal of H(2)O(2), oxidation of toxic reductants, biosynthesis and degradation of lignin, suberization, auxin catabolism, response to environmental stresses such as wounding, pathogen attack and oxidative stress. These functions might be dependent on each isozyme/isoform in each plant tissue. The protein is Peroxidase 65 (PER65) of Arabidopsis thaliana (Mouse-ear cress).